The sequence spans 496 residues: GTPase Der (496 aa).

EngA-type G domains lie at 3–168 (PIIA…VPEK) and 210–383 (IKLA…DCST). Residues 9-16 (GRPNVGKS), 56-60 (DTGGI), 120-123 (NKID), 216-223 (GRPNVGKS), 263-267 (DTAGV), and 328-331 (NKWD) each bind GTP. Positions 384–468 (KRINTSLLTR…PIRIQFKESE (85 aa)) constitute a KH-like domain.

It belongs to the TRAFAC class TrmE-Era-EngA-EngB-Septin-like GTPase superfamily. EngA (Der) GTPase family. Associates with the 50S ribosomal subunit.

In terms of biological role, GTPase that plays an essential role in the late steps of ribosome biogenesis. The sequence is that of GTPase Der from Hamiltonella defensa subsp. Acyrthosiphon pisum (strain 5AT).